A 185-amino-acid chain; its full sequence is Acireductone dioxygenase (185 aa).

Residues H101, H103, E107, and H145 each contribute to the Fe(2+) site. Residues H101, H103, E107, and H145 each coordinate Ni(2+).

This sequence belongs to the acireductone dioxygenase (ARD) family. Monomer. Requires Fe(2+) as cofactor. It depends on Ni(2+) as a cofactor.

It carries out the reaction 1,2-dihydroxy-5-(methylsulfanyl)pent-1-en-3-one + O2 = 3-(methylsulfanyl)propanoate + CO + formate + 2 H(+). The enzyme catalyses 1,2-dihydroxy-5-(methylsulfanyl)pent-1-en-3-one + O2 = 4-methylsulfanyl-2-oxobutanoate + formate + 2 H(+). The protein operates within amino-acid biosynthesis; L-methionine biosynthesis via salvage pathway; L-methionine from S-methyl-5-thio-alpha-D-ribose 1-phosphate: step 5/6. Catalyzes 2 different reactions between oxygen and the acireductone 1,2-dihydroxy-3-keto-5-methylthiopentene (DHK-MTPene) depending upon the metal bound in the active site. Fe-containing acireductone dioxygenase (Fe-ARD) produces formate and 2-keto-4-methylthiobutyrate (KMTB), the alpha-ketoacid precursor of methionine in the methionine recycle pathway. Ni-containing acireductone dioxygenase (Ni-ARD) produces methylthiopropionate, carbon monoxide and formate, and does not lie on the methionine recycle pathway. In Synechococcus sp. (strain RCC307), this protein is Acireductone dioxygenase.